The following is a 421-amino-acid chain: Cell division protein FtsA (421 aa).

This sequence belongs to the FtsA/MreB family. Self-interacts. Interacts with FtsZ.

It is found in the cell membrane. Its function is as follows. Cell division protein that is involved in the assembly of the Z ring. May serve as a membrane anchor for the Z ring. In Buchnera aphidicola subsp. Baizongia pistaciae (strain Bp), this protein is Cell division protein FtsA.